Reading from the N-terminus, the 934-residue chain is Progesterone receptor (934 aa).

A disordered region spans residues 1-49 (MTELKSKGPRAPHVAGGPPSPEVGSPLLCRPAAGPFQGSQTSDTLPEVS). The segment at 1-164 (MTELKSKGPR…PATQRVLSPL (164 aa)) is AF3; mediates transcriptional activation. Positions 1–567 (MTELKSKGPR…YSFESLPQKI (567 aa)) are modulating, Pro-Rich. Position 20 is a phosphoserine (Ser-20). Positions 55–59 (LDGLL) match the LXXL motif 1 motif. The disordered stretch occupies residues 61 to 239 (PRLCQGQDPP…EDSAGPLLKG (179 aa)). At Ser-81 the chain carries Phosphoserine. The LXXL motif 2 motif lies at 115 to 119 (LDTLL). Phosphoserine occurs at positions 130 and 162. The segment at 165–305 (MSRSGGKTED…LATTMMDFIH (141 aa)) is mediates transcriptional transrepression. The Nuclear localization signal signature appears at 183–187 (KVLPR). Ser-190 is subject to Phosphoserine. A compositionally biased stretch (polar residues) spans 191-203 (PSRQLLLPTSGSP). At Ser-213 the chain carries Phosphoserine. The span at 220–231 (EVEEEDGSESED) shows a compositional bias: acidic residues. The residue at position 294 (Ser-294) is a Phosphoserine; by MAPK1. Residues 331–375 (GGAGAASAFAPPQSSPSASSTPVAVGDFPDCAYPPDAEPKDNAYP) are disordered. Over residues 335–350 (AASAFAPPQSSPSASS) the composition is skewed to low complexity. The residue at position 345 (Ser-345) is a Phosphoserine; by MAPK. Lys-388 participates in a covalent cross-link: Glycyl lysine isopeptide (Lys-Gly) (interchain with G-Cter in SUMO); alternate. A Glycyl lysine isopeptide (Lys-Gly) (interchain with G-Cter in ubiquitin); alternate cross-link involves residue Lys-388. A Phosphoserine; by CDK2 modification is found at Ser-400. Positions 415–454 (PDFPLGPPPQLPPRAPPSRPGEAAVTAAPASASVSSASSP) are disordered. Positions 418–433 (PLGPPPQLPPRAPPSR) are enriched in pro residues. A compositionally biased stretch (low complexity) spans 434–454 (PGEAAVTAAPASASVSSASSP). The tract at residues 456–547 (STLECILYKA…VYPPYLNYLR (92 aa)) is AF1; mediates transcriptional activation. Lys-532 is covalently cross-linked (Glycyl lysine isopeptide (Lys-Gly) (interchain with G-Cter in SUMO)). 2 NR C4-type zinc fingers span residues 568–588 (CLIC…CGSC) and 604–628 (CAGR…LRKC). Positions 568-640 (CLICGDEASG…AGMVLGGRKF (73 aa)) form a DNA-binding region, nuclear receptor. Residue Ser-677 is modified to Phosphoserine. The region spanning 680-914 (QDIQLIPPLI…EFPEMMSEVI (235 aa)) is the NR LBD domain. Residues 688–934 (LIKLLMSIEP…MVKPLLFHKK (247 aa)) are AF2; mediates transcriptional activation. Arg-767 contributes to the progesterone binding site.

This sequence belongs to the nuclear hormone receptor family. As to quaternary structure, interacts with SMARD1 and UNC45A. Interacts with CUEDC2; the interaction promotes ubiquitination, decreases sumoylation, and represses transcriptional activity. Interacts with PIAS3; the interaction promotes sumoylation of PR in a hormone-dependent manner, inhibits DNA-binding, and alters nuclear export. Interacts with SP1; the interaction requires ligand-induced phosphorylation on Ser-345 by ERK1/2-MAPK. Interacts with PRMT2. Interacts with NCOA2 and NCOA1. Interacts with KLF9. Interacts with GTF2B. Phosphorylated on multiple serine sites. Several of these sites are hormone-dependent. Phosphorylation on Ser-294 is highly hormone-dependent and modulates ubiquitination and sumoylation on Lys-388. Phosphorylation on Ser-345 also requires induction by hormone. Basal phosphorylation on Ser-81, Ser-162, Ser-190 and Ser-400 is increased in response to progesterone and can be phosphorylated in vitro by the CDK2-A1 complex. Increased levels of phosphorylation on Ser-400 also in the presence of EGF, heregulin, IGF, PMA and FBS. Phosphorylation at this site by CDK2 is ligand-independent, and increases nuclear translocation and transcriptional activity. Phosphorylation at Ser-162 and Ser-294, but not at Ser-190, is impaired during the G(2)/M phase of the cell cycle. Phosphorylation on Ser-345 by ERK1/2 MAPK is required for interaction with SP1. Post-translationally, sumoylation is hormone-dependent and represses transcriptional activity. Sumoylation on all three sites is enhanced by PIAS3. Desumoylated by SENP1. Sumoylation on Lys-388, the main site of sumoylation, is repressed by ubiquitination on the same site, and modulated by phosphorylation at Ser-294. In terms of processing, ubiquitination is hormone-dependent and represses sumoylation on the same site. Promoted by MAPK-mediated phosphorylation on Ser-294. Ubiquitinated by UBR5, leading to its degradation: UBR5 specifically recognizes and binds ligand-bound PGR when it is not associated with coactivators (NCOAs). In presence of NCOAs, the UBR5-degron is not accessible, preventing its ubiquitination and degradation. Palmitoylated by ZDHHC7 and ZDHHC21. Palmitoylation is required for plasma membrane targeting and for rapid intracellular signaling via ERK and AKT kinases and cAMP generation.

The protein localises to the nucleus. It localises to the cytoplasm. Its function is as follows. The steroid hormones and their receptors are involved in the regulation of eukaryotic gene expression and affect cellular proliferation and differentiation in target tissues. Transcriptional activator of several progesteron-dependent promoters in a variety of cell types. Involved in activation of SRC-dependent MAPK signaling on hormone stimulation. This chain is Progesterone receptor (PGR), found in Colobus guereza (Mantled guereza).